A 225-amino-acid polypeptide reads, in one-letter code: MSITTIIGPMFSGKTTEFIRLIERKKIAGKKCLIIKNYRDIRYDSDDNDKYHVTTHNNIIYRNCDIMFTDNLNKTSLIDTFQEKYDVIGIEEGFFFEGVTDFSNELANRGMEVIISTLESSYKQEIFSEIGKLIAISEDVIKLKAICMGCKISDASFTIRTIESDEKILVGGIDKYQSVCRKCLNLHKRKNTLSTESEQINNQTELSEPTRQKESLKIKKRRIDS.

8 to 15 contributes to the ATP binding site; that stretch reads GPMFSGKT. Glutamate 92 functions as the Proton acceptor in the catalytic mechanism. Residue tyrosine 122 coordinates substrate. Residues cysteine 147 and cysteine 150 each contribute to the Zn(2+) site. 167–171 serves as a coordination point for substrate; sequence KILVG. Positions 180 and 183 each coordinate Zn(2+). Polar residues predominate over residues 197–207; that stretch reads SEQINNQTELS. Residues 197-225 are disordered; it reads SEQINNQTELSEPTRQKESLKIKKRRIDS. The span at 208-225 shows a compositional bias: basic and acidic residues; that stretch reads EPTRQKESLKIKKRRIDS.

It belongs to the thymidine kinase family.

It carries out the reaction thymidine + ATP = dTMP + ADP + H(+). In Acanthamoeba polyphaga mimivirus (APMV), this protein is Thymidine kinase (TK).